Reading from the N-terminus, the 170-residue chain is Protein ripply3 (170 aa).

The WRPW motif motif lies at 40–43; the sequence is WRPW. The tract at residues 79–114 is ripply homology domain; the sequence is HPVRLYMPKSKTSEYLQHMGKKVLANFPVQATIHFY. A compositionally biased stretch (polar residues) spans 143–152; sequence VNSSRGSGDN. A disordered region spans residues 143–170; that stretch reads VNSSRGSGDNYSVPGGPKRNISSHTGSA.

Belongs to the ripply family. Interacts with tbx1 and tle4/grg4.

The protein resides in the nucleus. Acts as a transcriptional corepressor. Negative regulator of the transcriptional activity of tbx1 that plays a key role in pharyngeal development. Plays a role in the formation of the anteroposterior (AP) axis during embryonic development; required to establish the posterolateral border of the pre-placodal ectoderm (PPE) acting downstream of the retinoic acid receptor (RAR) signaling. This chain is Protein ripply3, found in Xenopus tropicalis (Western clawed frog).